A 253-amino-acid chain; its full sequence is MSKNADLEAIPAAEEIKKPNPPKEEASIKGFTWWRRTLQYNTGLGLSEDEKLNYENDYKYILERKQCKQCYEYKDWILKYSPTVTFMIQQIAKLSDGNPNIDGKNLKPFDESKIICDICPEWKSGGFHPDLGILICQNRIRNKWHLEDTLAHELVHQFDNLKWKVNWLNLKQHACSEIRASSLSGECRFGQEFARRGFGFKIANGHQECVKRRAILSVMGNPNCKDRAEAELVVNEVWDSCFNDTRPFEEIYR.

The segment at 1 to 23 (MSKNADLEAIPAAEEIKKPNPPK) is disordered. Over residues 14–23 (EEIKKPNPPK) the composition is skewed to basic and acidic residues. Histidine 152 lines the a divalent metal cation pocket. Glutamate 153 is a catalytic residue. Histidine 156 is an a divalent metal cation binding site.

The protein belongs to the peptidase M76 family.

It is found in the mitochondrion inner membrane. Functionally, has a dual role in the assembly of mitochondrial ATPase. Acts as a protease that removes N-terminal residues of mitochondrial ATPase CF(0) subunit 6 at the intermembrane space side. Also involved in the correct assembly of the membrane-embedded ATPase CF(0) particle, probably mediating association of subunit 6 with the subunit 9 ring. This Vanderwaltozyma polyspora (strain ATCC 22028 / DSM 70294 / BCRC 21397 / CBS 2163 / NBRC 10782 / NRRL Y-8283 / UCD 57-17) (Kluyveromyces polysporus) protein is Mitochondrial inner membrane protease ATP23 (ATP23).